Consider the following 90-residue polypeptide: Movement protein (90 aa).

A helical membrane pass occupies residues 32-52 (FVFVTFGLLIAVGVAWLAYTL).

Belongs to the mastrevirus movement protein family. In terms of assembly, interacts with the capsid protein (CP). Part of a MP-CP-viral DNA complex.

The protein localises to the host membrane. Involved in the viral transport within, and between cells. The protein is Movement protein of Wheat dwarf virus (isolate Sweden) (WDV).